The chain runs to 1072 residues: E3 ubiquitin-protein ligase RNF31 (1072 aa).

The interval Met-1–Arg-485 is polyubiquitin-binding. The PUB domain maps to Thr-71–Asp-142. The tract at residues Gln-263–Ser-290 is disordered. Residues Thr-265–Gln-280 are compositionally biased toward polar residues. Over residues Ser-281–Ser-290 the composition is skewed to low complexity. 2 RanBP2-type zinc fingers span residues Ser-299–Cys-329 and Ala-350–Ala-379. Ser-383 is subject to Phosphoserine. The segment at Gln-409–Pro-438 adopts a RanBP2-type 3 zinc-finger fold. The disordered stretch occupies residues His-443–Met-484. Residues Arg-463–Ser-472 are compositionally biased toward low complexity. Phosphoserine is present on Ser-466. A compositionally biased stretch (basic and acidic residues) spans Asp-475–Met-484. The interaction with RBCK1 stretch occupies residues Gly-563–Arg-616. In terms of domain architecture, UBA spans Asn-564–Gln-615. Residues Leu-695 to Asp-929 are TRIAD supradomain. 6 residues coordinate Zn(2+): Cys-699, Cys-702, Cys-717, Cys-719, Cys-722, and Cys-725. Residues Cys-699–Arg-749 form an RING-type 1 zinc finger. Residue Lys-735 forms a (Microbial infection) Glycyl lysine isopeptide (Lys-Gly) (interchain with G-Cter in ubiquitin) linkage. Zn(2+) is bound by residues Cys-744 and Cys-747. Residues Ala-779 to Cys-841 form an IBR-type zinc finger. Lys-783 is covalently cross-linked ((Microbial infection) Glycyl lysine isopeptide (Lys-Gly) (interchain with G-Cter in ubiquitin)). Zn(2+)-binding residues include Cys-799, Cys-802, Cys-817, Cys-820, Cys-825, Cys-828, His-836, Cys-841, Cys-871, and Cys-874. Residues Cys-871–Cys-901 form an RING-type 2; atypical zinc finger. Lys-875 is covalently cross-linked ((Microbial infection) Glycyl lysine isopeptide (Lys-Gly) (interchain with G-Cter in ubiquitin)). Residue Cys-885 is part of the active site. The Zn(2+) site is built by Cys-890, Cys-893, Cys-898, Cys-901, Cys-916, and His-925. The interval Lys-910–Lys-1072 is LDD domain.

This sequence belongs to the RBR family. As to quaternary structure, component of the LUBAC complex (linear ubiquitin chain assembly complex) which consists of SHARPIN, RBCK1 and RNF31. LUBAC has a MW of approximately 600 kDa suggesting a heteromultimeric assembly of its subunits. Associates with the TNF-R1 signaling complex (TNF-RSC) in a stimulation-dependent manner. Interacts (via the PUB domain) with OTULIN (via the PIM motif); the interaction is direct. Interacts (via the PUB domain) with VCP (via the PIM motif). Interacts (via the PUB domain) with SPATA2 (via the PIM motif); interaction is direct and bridges RNF31 and CYLD. Interacts with CYLD; the interaction is indirect and is mediated via SPATA2. Interacts with MUSK. Interacts with CARD11, promoting linear ubiquitination of BCL10. In terms of assembly, (Microbial infection) Interacts with S.flexneri E3 ubiquitin-protein ligases IpaH1.4 and IpaH2.5, leading to its ubiquitination. Autoubiquitinated. Interaction with OTULIN is required to suppress formation of 'Met-1'-linked polyubiquitin chains and prevent subsequent inactivation of the LUBAC complex. In terms of processing, cleaved by caspase during apoptosis. Post-translationally, (Microbial infection) Ubiquitinated by S.flexneri E3 ubiquitin-protein ligases IpaH1.4 and IpaH2.5, leading to its degradation by the proteasome, thereby preventing formation of the bacterial ubiquitin coat and activation of innate immunity. In terms of tissue distribution, expressed in both normal and transformed breast epithelial cell lines.

The protein resides in the cytoplasm. The enzyme catalyses [E2 ubiquitin-conjugating enzyme]-S-ubiquitinyl-L-cysteine + [acceptor protein]-L-lysine = [E2 ubiquitin-conjugating enzyme]-L-cysteine + [acceptor protein]-N(6)-ubiquitinyl-L-lysine.. The protein operates within protein modification; protein ubiquitination. E3 ubiquitin-protein ligase component of the LUBAC complex which conjugates linear ('Met-1'-linked) polyubiquitin chains to substrates and plays a key role in NF-kappa-B activation and regulation of inflammation. LUBAC conjugates linear polyubiquitin to IKBKG and RIPK1 and is involved in activation of the canonical NF-kappa-B and the JNK signaling pathways. Linear ubiquitination mediated by the LUBAC complex interferes with TNF-induced cell death and thereby prevents inflammation. LUBAC is recruited to the TNF-R1 signaling complex (TNF-RSC) following polyubiquitination of TNF-RSC components by BIRC2 and/or BIRC3 and to conjugate linear polyubiquitin to IKBKG and possibly other components contributing to the stability of the complex. The LUBAC complex is also involved in innate immunity by conjugating linear polyubiquitin chains at the surface of bacteria invading the cytosol to form the ubiquitin coat surrounding bacteria. LUBAC is not able to initiate formation of the bacterial ubiquitin coat, and can only promote formation of linear polyubiquitins on pre-existing ubiquitin. Recruited to the surface of bacteria by RNF213, which initiates the bacterial ubiquitin coat. The bacterial ubiquitin coat acts as an 'eat-me' signal for xenophagy and promotes NF-kappa-B activation. Together with OTULIN, the LUBAC complex regulates the canonical Wnt signaling during angiogenesis. RNF31 is required for linear ubiquitination of BCL10, thereby promoting TCR-induced NF-kappa-B activation. Binds polyubiquitin of different linkage types. The polypeptide is E3 ubiquitin-protein ligase RNF31 (Homo sapiens (Human)).